The sequence spans 109 residues: Somatostatin-2 (109 aa).

An N-terminal signal peptide occupies residues 1-16 (MQFLASLVSFLLVVWS). Residues 17 to 80 (VKATALPVED…EPLENKLEER (64 aa)) constitute a propeptide that is removed on maturation. A disulfide bond links cysteine 98 and cysteine 109.

It belongs to the somatostatin family.

Its subcellular location is the secreted. In terms of biological role, somatostatin inhibits the release of somatotropin. The polypeptide is Somatostatin-2 (sst2) (Protopterus annectens (African lungfish)).